A 346-amino-acid chain; its full sequence is Short-wave-sensitive opsin 1 (346 aa).

At 1–31 (MSGEDDFYLFQNISSVGPWDGPQYHLAPVWA) the chain is on the extracellular side. Asn-12 carries an N-linked (GlcNAc...) asparagine glycan. A helical transmembrane segment spans residues 32–56 (FRLQAAFMGFVFFVGTPLNAIVLVA). At 57–68 (TLHYKKLRQPLN) the chain is on the cytoplasmic side. A helical membrane pass occupies residues 69–94 (YILVNVSLGGFLFCIFSVFTVFIASC). Residues 95-108 (HGYFLFGRHVCALE) are Extracellular-facing. A disulfide bond links Cys-105 and Cys-182. A helical transmembrane segment spans residues 109 to 128 (AFLGSVAGLVTGWSLAFLAF). Over 129 to 147 (ERYVVICKPFGSIRFNSKH) the chain is Cytoplasmic. A helical transmembrane segment spans residues 148–171 (ALMVVLATWIIGIGVSIPPFFGWS). Residues 172–197 (RFIPEGLQCSCGPDWYTVGTKYRSEY) lie on the Extracellular side of the membrane. A helical membrane pass occupies residues 198–225 (YTWFLFIFCFIIPLSLICFSYSQLLRTL). Over 226-247 (RAVAAQQQESATTQKAEREVSH) the chain is Cytoplasmic. A helical membrane pass occupies residues 248 to 271 (MVVVMVGSFCLCYVPYAALAMYMV). Residues 272–279 (NNRNHGLD) are Extracellular-facing. The chain crosses the membrane as a helical span at residues 280 to 304 (LRLVTIPAFFSKSSCVYNPIIYCFM). Lys-291 is subject to N6-(retinylidene)lysine. Topologically, residues 305 to 346 (NKQFRACILEMVCRKPMADESDVSGSQKTEVSTVSSSKVGPH) are cytoplasmic. Residues 324 to 346 (ESDVSGSQKTEVSTVSSSKVGPH) are disordered. The segment covering 330 to 346 (SQKTEVSTVSSSKVGPH) has biased composition (low complexity).

This sequence belongs to the G-protein coupled receptor 1 family. Opsin subfamily. Post-translationally, phosphorylated on some or all of the serine and threonine residues present in the C-terminal region. Expressed in the inner and outer segments of cone photoreceptor cells in the retina (at protein level).

The protein resides in the cell membrane. Its subcellular location is the photoreceptor inner segment. It is found in the cell projection. It localises to the cilium. The protein localises to the photoreceptor outer segment. The protein resides in the cytoplasm. Its subcellular location is the perinuclear region. Visual pigments are the light-absorbing molecules that mediate vision. They consist of an apoprotein, opsin, covalently linked to cis-retinal. Required for the maintenance of cone outer segment organization in the ventral retina, but not essential for the maintenance of functioning cone photoreceptors. Involved in ensuring correct abundance and localization of retinal membrane proteins. May increase spectral sensitivity in dim light. In Mus musculus (Mouse), this protein is Short-wave-sensitive opsin 1 (Opn1sw).